The chain runs to 303 residues: L(+)-tartrate dehydratase subunit alpha (303 aa).

Iron-sulfur cluster is bound by residues Cys71, Cys190, and Cys277.

It belongs to the class-I fumarase family. As to quaternary structure, tetramer of two alpha and two beta subunits. It depends on iron-sulfur cluster as a cofactor.

It catalyses the reaction (2R,3R)-tartrate = oxaloacetate + H2O. In Escherichia coli O6:H1 (strain CFT073 / ATCC 700928 / UPEC), this protein is L(+)-tartrate dehydratase subunit alpha (ttdA).